Here is a 141-residue protein sequence, read N- to C-terminus: Large ribosomal subunit protein uL11 (141 aa).

Belongs to the universal ribosomal protein uL11 family. Part of the ribosomal stalk of the 50S ribosomal subunit. Interacts with L10 and the large rRNA to form the base of the stalk. L10 forms an elongated spine to which L12 dimers bind in a sequential fashion forming a multimeric L10(L12)X complex. In terms of processing, one or more lysine residues are methylated.

Functionally, forms part of the ribosomal stalk which helps the ribosome interact with GTP-bound translation factors. The protein is Large ribosomal subunit protein uL11 of Helicobacter hepaticus (strain ATCC 51449 / 3B1).